A 284-amino-acid polypeptide reads, in one-letter code: Sulfotransferase 2A1 (284 aa).

3'-phosphoadenylyl sulfate-binding residues include K43, S44, G45, T46, N47, and W48. The active-site Proton acceptor is the H98. Positions 120, 128, 183, 217, 222, 246, 247, and 248 each coordinate 3'-phosphoadenylyl sulfate.

The protein belongs to the sulfotransferase 1 family. In terms of assembly, homodimer.

It is found in the cytoplasm. The catalysed reaction is an alcohol + 3'-phosphoadenylyl sulfate = an alkyl sulfate + adenosine 3',5'-bisphosphate + H(+). It carries out the reaction taurolithocholate + 3'-phosphoadenylyl sulfate = taurolithocholate 3-sulfate + adenosine 3',5'-bisphosphate + H(+). The enzyme catalyses lithocholate + 3'-phosphoadenylyl sulfate = lithocholate sulfate + adenosine 3',5'-bisphosphate + H(+). It catalyses the reaction (24S)-hydroxycholesterol + 3'-phosphoadenylyl sulfate = (24S)-hydroxycholesterol 24-sulfate + adenosine 3',5'-bisphosphate + H(+). The catalysed reaction is (24S)-hydroxycholesterol + 3'-phosphoadenylyl sulfate = (24S)-hydroxycholesterol 3-sulfate + adenosine 3',5'-bisphosphate + H(+). It carries out the reaction (24S)-hydroxycholesterol 24-sulfate + 3'-phosphoadenylyl sulfate = (24S)-hydroxycholesterol 3,24-disulfate + adenosine 3',5'-bisphosphate + H(+). The enzyme catalyses 3beta-hydroxyandrost-5-en-17-one + 3'-phosphoadenylyl sulfate = dehydroepiandrosterone 3-sulfate + adenosine 3',5'-bisphosphate + H(+). It catalyses the reaction pregnenolone + 3'-phosphoadenylyl sulfate = pregnenolone sulfate + adenosine 3',5'-bisphosphate + H(+). The catalysed reaction is androsterone + 3'-phosphoadenylyl sulfate = androsterone 3alpha-sulfate + adenosine 3',5'-bisphosphate + H(+). Its function is as follows. Sulfotransferase that utilizes 3'-phospho-5'-adenylyl sulfate (PAPS) as sulfonate donor to catalyze the sulfonation of steroids and bile acids in the liver and adrenal glands. Mediates the sulfation of a wide range of steroids and sterols, including pregnenolone, androsterone, DHEA, bile acids, cholesterol and as well many xenobiotics that contain alcohol and phenol functional groups. Sulfonation increases the water solubility of most compounds, and therefore their renal excretion, but it can also result in bioactivation to form active metabolites. Plays an important role in maintening steroid and lipid homeostasis. Plays a key role in bile acid metabolism. In addition, catalyzes the metabolic activation of potent carcinogenic polycyclic arylmethanols. The sequence is that of Sulfotransferase 2A1 (Sult2a1) from Rattus norvegicus (Rat).